The sequence spans 155 residues: Small ribosomal subunit protein uS7cz/uS7cy (155 aa).

This sequence belongs to the universal ribosomal protein uS7 family. In terms of assembly, part of the 30S ribosomal subunit.

The protein resides in the plastid. The protein localises to the chloroplast. Functionally, one of the primary rRNA binding proteins, it binds directly to 16S rRNA where it nucleates assembly of the head domain of the 30S subunit. The sequence is that of Small ribosomal subunit protein uS7cz/uS7cy (rps7-A) from Angiopteris evecta (Mule's foot fern).